Here is a 123-residue protein sequence, read N- to C-terminus: Large ribosomal subunit protein uL18 (123 aa).

It belongs to the universal ribosomal protein uL18 family. Part of the 50S ribosomal subunit; part of the 5S rRNA/L5/L18/L25 subcomplex. Contacts the 5S and 23S rRNAs.

Functionally, this is one of the proteins that bind and probably mediate the attachment of the 5S RNA into the large ribosomal subunit, where it forms part of the central protuberance. The chain is Large ribosomal subunit protein uL18 from Wolbachia pipientis subsp. Culex pipiens (strain wPip).